The primary structure comprises 356 residues: Phospho-N-acetylmuramoyl-pentapeptide-transferase (356 aa).

The next 10 membrane-spanning stretches (helical) occupy residues 25–45 (TVAA…SIIS), 70–90 (GTPT…ALLW), 93–113 (LFNI…AIGF), 138–158 (FLVA…GLAL), 164–184 (YFIN…VGLG), 195–215 (GLAI…AYLS), 232–252 (VGEL…FLWF), 258–278 (AIFM…IVSV), 284–304 (IVLI…IIQV), and 333–353 (QIVV…LSTL).

Belongs to the glycosyltransferase 4 family. MraY subfamily. Requires Mg(2+) as cofactor.

Its subcellular location is the cell inner membrane. It carries out the reaction UDP-N-acetyl-alpha-D-muramoyl-L-alanyl-gamma-D-glutamyl-meso-2,6-diaminopimeloyl-D-alanyl-D-alanine + di-trans,octa-cis-undecaprenyl phosphate = di-trans,octa-cis-undecaprenyl diphospho-N-acetyl-alpha-D-muramoyl-L-alanyl-D-glutamyl-meso-2,6-diaminopimeloyl-D-alanyl-D-alanine + UMP. It participates in cell wall biogenesis; peptidoglycan biosynthesis. Catalyzes the initial step of the lipid cycle reactions in the biosynthesis of the cell wall peptidoglycan: transfers peptidoglycan precursor phospho-MurNAc-pentapeptide from UDP-MurNAc-pentapeptide onto the lipid carrier undecaprenyl phosphate, yielding undecaprenyl-pyrophosphoryl-MurNAc-pentapeptide, known as lipid I. The sequence is that of Phospho-N-acetylmuramoyl-pentapeptide-transferase from Bartonella bacilliformis (strain ATCC 35685 / KC583 / Herrer 020/F12,63).